A 264-amino-acid polypeptide reads, in one-letter code: Apolipoprotein A-I (264 aa).

Positions 1–18 (MRGVLVTLAVLFLTGTQA) are cleaved as a signal peptide. Tandem repeats lie at residues 67 to 88 (LKLADNLDTLSAAAAKLREDMT) and 89 to 110 (PYYREVREMWLKDTEALRAELT). The 10 X approximate tandem repeats stretch occupies residues 67-264 (LKLADNLDTL…LLDEVQKTMA (198 aa)). Residues 111-121 (KDLEEVKEKIR) form a 3; half-length repeat. Repeat copies occupy residues 122 to 143 (PFLDQFSAKWTEEVEQYRQRLA), 144 to 165 (PVAQELKDLTKQKVELMQAKLT), 166 to 187 (PVAEEVRDRLREQVEELRKNLA), 188 to 209 (PYSSELRQKLSQKLEEIRERGI), and 210 to 231 (PQASEYQAKVVEQLSNLREKMT). The 9; half-length repeat unit spans residues 232–242 (PLVQEFKERLT). Repeat 10 spans residues 243–264 (PYAENLKNRLIDLLDEVQKTMA).

The protein belongs to the apolipoprotein A1/A4/E family. As to expression, major protein of VLDL, HDL, LDL and in chylomicrons. Expressed in a number of tissues including liver, small intestine, lung, kidney, heart and muscle with highest expression in liver and small intestine.

The protein resides in the secreted. Participates in the reverse transport of cholesterol from tissues to the liver for excretion by promoting cholesterol efflux from tissues and by acting as a cofactor for the lecithin cholesterol acyltransferase (LCAT). This is Apolipoprotein A-I (APOA1) from Coturnix japonica (Japanese quail).